Here is a 242-residue protein sequence, read N- to C-terminus: Small ribosomal subunit protein uS3 (242 aa).

One can recognise a KH type-2 domain in the interval 39–110 (IRKFIHKKYG…QVRINVVEVE (72 aa)). Residues 216–242 (QPMPVGAAPRRRASRRPQQFEDRSNEG) are disordered. Basic and acidic residues predominate over residues 233 to 242 (QQFEDRSNEG).

It belongs to the universal ribosomal protein uS3 family. In terms of assembly, part of the 30S ribosomal subunit. Forms a tight complex with proteins S10 and S14.

Functionally, binds the lower part of the 30S subunit head. Binds mRNA in the 70S ribosome, positioning it for translation. This is Small ribosomal subunit protein uS3 from Synechococcus sp. (strain CC9605).